Reading from the N-terminus, the 189-residue chain is Mercury resistance operon ORF3 (189 aa).

A signal peptide (tat-type signal) is located at residues 1-27 (MTSPSPTARRTRLRRRTALALAAAATA). In terms of domain architecture, Thioredoxin spans 38–189 (TKANTPATRA…IQDALKKAGA (152 aa)).

Predicted to be exported by the Tat system. The position of the signal peptide cleavage has not been experimentally proven.

The protein resides in the secreted. In terms of biological role, probable mercury binding protein. This is Mercury resistance operon ORF3 from Streptomyces lividans.